The following is a 1148-amino-acid chain: Envelopment polyprotein (1148 aa).

Residues 1-23 (MGELSPVCLYLLLQGLLLCNTGA) form the signal peptide. Topologically, residues 24–495 (ARNLNELKME…VPGLHGWATM (472 aa)) are lumenal. Cystine bridges form between Cys34/Cys159, Cys68/Cys165, Cys117/Cys136, Cys141/Cys146, Cys183/Cys193, and Cys218/Cys257. A glycan (N-linked (GlcNAc...) asparagine; by host) is linked at Asn142. An N-linked (GlcNAc...) asparagine; by host glycan is attached at Asn357. 4 disulfides stabilise this stretch: Cys386-Cys445, Cys390-Cys399, Cys415-Cys434, and Cys462-Cys485. Asn409 carries an N-linked (GlcNAc...) asparagine; by host glycan. Residues 496 to 516 (LLLLTFCFGWVLIPTITMILL) traverse the membrane as a helical segment. Residues 517–637 (KILIAFAYLC…LSLFRYRSRF (121 aa)) lie on the Cytoplasmic side of the membrane. The segment at 526–543 (CSKYNTDSKFRILIEKVK) is binding to the ribonucleoprotein. 2 consecutive CCHC-type zinc fingers follow at residues 555–575 (CEVCQYECETAKELESHRKSC) and 580–601 (CPYCLNPSEATTSALQAHFKVC). Binding to the ribonucleoprotein stretches follow at residues 598–615 (FKVCKLRSRFQENLRKSL), 602–613 (KLRSRFQENLRK), and 621–635 (MQGCYRTLSLFRYRS). The ITAM domain occupies 621–644 (MQGCYRTLSLFRYRSRFFVGLVWC). The YxxL motif lies at 625–628 (YRTL). A helical membrane pass occupies residues 638 to 658 (FVGLVWCVLLVHHLIVWAASA). The Lumenal segment spans residues 659 to 1114 (ETQNLNAGWT…EWILGVLNGN (456 aa)). Cystine bridges form between Cys745-Cys780, Cys749-Cys787, Cys761-Cys894, Cys775-Cys905, Cys790-Cys913, Cys816-Cys825, Cys833-Cys842, and Cys873-Cys877. A fusion loop region spans residues 767 to 787 (YEYETGWGCNPPDCPGVGTGC). Residue Asn937 is glycosylated (N-linked (GlcNAc...) asparagine; by host). Cystine bridges form between Cys979/Cys1009, Cys1002/Cys1054, Cys1019/Cys1024, Cys1055/Cys1060, and Cys1094/Cys1098. The chain crosses the membrane as a helical span at residues 1115 to 1135 (WMVVAVLVVLLILSILLFTLC). Binding to the ribonucleoprotein regions lie at residues 1131–1143 (LFTLCCPRRPSYR) and 1131–1148 (LFTLCCPRRPSYRKEHKP). Residues 1136–1148 (CPRRPSYRKEHKP) lie on the Cytoplasmic side of the membrane.

The protein belongs to the hantavirus envelope glycoprotein family. Homodimer. Homotetramer; forms heterotetrameric Gn-Gc spikes in the pre-fusion conformation. Interacts (via C-terminus) with the nucleoprotein. Interacts with host TUFM; this interaction contributes to the virus-induced degradation of mitochondria by autophagy, which leads to degradation of host MAVS and inhibition of type I interferon (IFN) responses. Interacts with host MAP1LC3B; this interaction contributes to the virus-induced degradation of mitochondria by autophagy, which leads to degradation of host MAVS and inhibition of type I interferon (IFN) responses. In terms of assembly, homodimer. Homotetramer; forms heterotetrameric Gn-Gc spikes in the pre-fusion conformation. Homotrimer; forms homotrimer in the post-fusion conformation at acidic pH. Interacts (via C-terminus) with the nucleoprotein. Envelope polyprotein precursor is quickly cleaved in vivo just after synthesis, presumably by host signal peptidase.

It is found in the virion membrane. The protein localises to the host cell surface. Its subcellular location is the host Golgi apparatus membrane. The protein resides in the host endoplasmic reticulum membrane. It localises to the host mitochondrion. In terms of biological role, forms homotetramers with glycoprotein C at the surface of the virion. Attaches the virion to host cell receptors including integrin ITGAV/ITGB3. This attachment induces virion internalization predominantly through clathrin-dependent endocytosis. Mediates the assembly and budding of infectious virus particles through its interaction with the nucleocapsid protein and the viral genome. May dysregulate normal immune and endothelial cell responses through an ITAM motif. Translocates to mitochondria, binds to host TUFM and recruits MAP1LC3B. These interactions induce mitochondrial autophagy and therefore destruction of host MAVS leading to inhibition of type I interferon (IFN) responses. Concomitant breakdown of glycoprotein N is apparently prevented by the nucleoprotein that may inhibit Gn-stimulated autophagosome-lysosome fusion. Interacts with the viral genomic RNA. Functionally, forms homotetramers with glycoprotein N at the surface of the virion. Attaches the virion to host cell receptors including integrin ITGAV/ITGB3. This attachment induces virion internalization predominantly through clathrin-dependent endocytosis. Class II fusion protein that promotes fusion of viral membrane with host endosomal membrane after endocytosis of the virion. This chain is Envelopment polyprotein (GP), found in Homo sapiens (Human).